A 166-amino-acid chain; its full sequence is Large ribosomal subunit protein uL10 (166 aa).

The protein belongs to the universal ribosomal protein uL10 family. Part of the ribosomal stalk of the 50S ribosomal subunit. The N-terminus interacts with L11 and the large rRNA to form the base of the stalk. The C-terminus forms an elongated spine to which L12 dimers bind in a sequential fashion forming a multimeric L10(L12)X complex.

Functionally, forms part of the ribosomal stalk, playing a central role in the interaction of the ribosome with GTP-bound translation factors. In Tropheryma whipplei (strain TW08/27) (Whipple's bacillus), this protein is Large ribosomal subunit protein uL10.